We begin with the raw amino-acid sequence, 358 residues long: Methylthioribose-1-phosphate isomerase (358 aa).

Residues 54-56 (RGA), Arg96, and Gln205 each bind substrate. Asp246 serves as the catalytic Proton donor. Substrate is bound at residue 256-257 (SK).

Belongs to the eIF-2B alpha/beta/delta subunits family. MtnA subfamily.

The enzyme catalyses 5-(methylsulfanyl)-alpha-D-ribose 1-phosphate = 5-(methylsulfanyl)-D-ribulose 1-phosphate. Its pathway is amino-acid biosynthesis; L-methionine biosynthesis via salvage pathway; L-methionine from S-methyl-5-thio-alpha-D-ribose 1-phosphate: step 1/6. Its function is as follows. Catalyzes the interconversion of methylthioribose-1-phosphate (MTR-1-P) into methylthioribulose-1-phosphate (MTRu-1-P). The polypeptide is Methylthioribose-1-phosphate isomerase (Pseudomonas putida (strain GB-1)).